We begin with the raw amino-acid sequence, 649 residues long: ATP-dependent DNA helicase Q1 (649 aa).

Residues 100 to 275 form the Helicase ATP-binding domain; it reads INVTMAGKEV…QKILCIEKCF (176 aa). 113–120 provides a ligand contact to ATP; the sequence is MPTGGGKG. The DEVH box motif lies at 219 to 222; sequence DEVH. Positions 300–451 constitute a Helicase C-terminal domain; the sequence is FIEDIVKLIN…EMVSYCQNIS (152 aa). Residues Cys453, Cys471, Cys475, and Cys478 each coordinate Zn(2+). 2 positions are modified to N6-acetyllysine: Lys514 and Lys522. A phosphoserine mark is found at Ser597 and Ser602. Polar residues predominate over residues 597-608; the sequence is SFRVESSQTCHS. The disordered stretch occupies residues 597–649; sequence SFRVESSQTCHSEQGDKKMEEKNSGNFQKKAANMLQQSGSKNTGAKKRKIDDA. Positions 609–619 are enriched in basic and acidic residues; the sequence is EQGDKKMEEKN. The span at 630 to 639 shows a compositional bias: polar residues; it reads MLQQSGSKNT. Phosphoserine is present on Ser634. Residues 640–649 show a composition bias toward basic residues; it reads GAKKRKIDDA.

Belongs to the helicase family. RecQ subfamily. In terms of assembly, may form homodimers or higher order oligomers. Interacts with EXO1. Interacts with MLH1. Interacts with PARP1. Mg(2+) is required as a cofactor. The cofactor is Mn(2+). Zn(2+) serves as cofactor.

It localises to the nucleus. The catalysed reaction is Couples ATP hydrolysis with the unwinding of duplex DNA by translocating in the 3'-5' direction.. It carries out the reaction ATP + H2O = ADP + phosphate + H(+). The enzyme catalyses dATP + H2O = dADP + phosphate + H(+). DNA helicase that plays a role in DNA damage repair and genome stability. Exhibits a magnesium- and ATP-dependent DNA-helicase activity that unwinds single- and double-stranded DNA in a 3'-5' direction. Plays a role in restoring regressed replication forks. Required to restart stalled replication forks induced by abortive topoisomerase 1 and 2 lesions. May play a role in the repair of DNA that is damaged by ultraviolet light or other mutagens. In Pongo abelii (Sumatran orangutan), this protein is ATP-dependent DNA helicase Q1 (RECQL).